Consider the following 114-residue polypeptide: Protein Tat (114 aa).

The segment at 1-24 (MDPVDPEVPPWHHPGSQPQIPCNN) is interaction with human CREBBP. A transactivation region spans residues 1–48 (MDPVDPEVPPWHHPGSQPQIPCNNCYCKRCCYHCYVCFVRKGLGISYG). Zn(2+) contacts are provided by Cys-22, Cys-25, and Cys-27. A cysteine-rich region spans residues 22–37 (CNNCYCKRCCYHCYVC). Position 28 is an N6-acetyllysine; by host PCAF (Lys-28). The Zn(2+) site is built by Cys-30, His-33, Cys-34, and Cys-37. Positions 38–48 (FVRKGLGISYG) are core. Residues 48–114 (GRKKRGRPAA…CHCCTRTSEQ (67 aa)) form a disordered region. The Nuclear localization signal, RNA-binding (TAR), and protein transduction signature appears at 49-56 (RKKRGRPA). Residues 49–84 (RKKRGRPAAASHPDHKDPVPKQSPTITKRKQERQEE) are interaction with the host capping enzyme RNGTT. An N6-acetyllysine; by host EP300 and GCN5L2 mark is found at Lys-50 and Lys-51. Asymmetric dimethylarginine; by host PRMT6 is present on Arg-52. Residue Lys-69 forms a Glycyl lysine isopeptide (Lys-Gly) (interchain with G-Cter in ubiquitin) linkage.

Belongs to the lentiviruses Tat family. In terms of assembly, interacts with host CCNT1. Associates with the P-TEFb complex composed at least of Tat, P-TEFb (CDK9 and CCNT1), TAR RNA, RNA Pol II. Recruits the HATs CREBBP, TAF1/TFIID, EP300, PCAF and GCN5L2. Interacts with host KAT5/Tip60; this interaction targets the latter to degradation. Interacts with the host deacetylase SIRT1. Interacts with host capping enzyme RNGTT; this interaction stimulates RNGTT. Binds to host KDR, and to the host integrins ITGAV/ITGB3 and ITGA5/ITGB1. Interacts with host KPNB1/importin beta-1 without previous binding to KPNA1/importin alpha-1. Interacts with EIF2AK2. Interacts with host nucleosome assembly protein NAP1L1; this interaction may be required for the transport of Tat within the nucleus, since the two proteins interact at the nuclear rim. Interacts with host C1QBP/SF2P32; this interaction involves lysine-acetylated Tat. Interacts with the host chemokine receptors CCR2, CCR3 and CXCR4. Interacts with host DPP4/CD26; this interaction may trigger an anti-proliferative effect. Interacts with host LDLR. Interacts with the host extracellular matrix metalloproteinase MMP1. Interacts with host PRMT6; this interaction mediates Tat's methylation. Interacts with, and is ubiquitinated by MDM2/Hdm2. Interacts with host PSMC3 and HTATIP2. Interacts with STAB1; this interaction may overcome SATB1-mediated repression of IL2 and IL2RA (interleukin) in T cells by binding to the same domain than HDAC1. Interacts (when acetylated) with human CDK13, thereby increasing HIV-1 mRNA splicing and promoting the production of the doubly spliced HIV-1 protein Nef. Interacts with host TBP; this interaction modulates the activity of transcriptional pre-initiation complex. Interacts with host RELA. Interacts with host PLSCR1; this interaction negatively regulates Tat transactivation activity by altering its subcellular distribution. Post-translationally, asymmetrical arginine methylation by host PRMT6 seems to diminish the transactivation capacity of Tat and affects the interaction with host CCNT1. In terms of processing, acetylation by EP300, CREBBP, GCN5L2/GCN5 and PCAF regulates the transactivation activity of Tat. EP300-mediated acetylation of Lys-50 promotes dissociation of Tat from the TAR RNA through the competitive binding to PCAF's bromodomain. In addition, the non-acetylated Tat's N-terminus can also interact with PCAF. PCAF-mediated acetylation of Lys-28 enhances Tat's binding to CCNT1. Lys-50 is deacetylated by SIRT1. Polyubiquitination by host MDM2 does not target Tat to degradation, but activates its transactivation function and fosters interaction with CCNT1 and TAR RNA. Post-translationally, phosphorylated by EIF2AK2 on serine and threonine residues adjacent to the basic region important for TAR RNA binding and function. Phosphorylation of Tat by EIF2AK2 is dependent on the prior activation of EIF2AK2 by dsRNA.

The protein localises to the host nucleus. It is found in the host nucleolus. It localises to the host cytoplasm. Its subcellular location is the secreted. Functionally, transcriptional activator that increases RNA Pol II processivity, thereby increasing the level of full-length viral transcripts. Recognizes a hairpin structure at the 5'-LTR of the nascent viral mRNAs referred to as the transactivation responsive RNA element (TAR) and recruits the cyclin T1-CDK9 complex (P-TEFb complex) that will in turn hyperphosphorylate the RNA polymerase II to allow efficient elongation. The CDK9 component of P-TEFb and other Tat-activated kinases hyperphosphorylate the C-terminus of RNA Pol II that becomes stabilized and much more processive. Other factors such as HTATSF1/Tat-SF1, SUPT5H/SPT5, and HTATIP2 are also important for Tat's function. Besides its effect on RNA Pol II processivity, Tat induces chromatin remodeling of proviral genes by recruiting the histone acetyltransferases (HATs) CREBBP, EP300 and PCAF to the chromatin. This also contributes to the increase in proviral transcription rate, especially when the provirus integrates in transcriptionally silent region of the host genome. To ensure maximal activation of the LTR, Tat mediates nuclear translocation of NF-kappa-B by interacting with host RELA. Through its interaction with host TBP, Tat may also modulate transcription initiation. Tat can reactivate a latently infected cell by penetrating in it and transactivating its LTR promoter. In the cytoplasm, Tat is thought to act as a translational activator of HIV-1 mRNAs. Its function is as follows. Extracellular circulating Tat can be endocytosed by surrounding uninfected cells via the binding to several surface receptors such as CD26, CXCR4, heparan sulfate proteoglycans (HSPG) or LDLR. Neurons are rarely infected, but they internalize Tat via their LDLR. Through its interaction with nuclear HATs, Tat is potentially able to control the acetylation-dependent cellular gene expression. Modulates the expression of many cellular genes involved in cell survival, proliferation or in coding for cytokines or cytokine receptors. Tat plays a role in T-cell and neurons apoptosis. Tat induced neurotoxicity and apoptosis probably contribute to neuroAIDS. Circulating Tat also acts as a chemokine-like and/or growth factor-like molecule that binds to specific receptors on the surface of the cells, affecting many cellular pathways. In the vascular system, Tat binds to ITGAV/ITGB3 and ITGA5/ITGB1 integrins dimers at the surface of endothelial cells and competes with bFGF for heparin-binding sites, leading to an excess of soluble bFGF. In Homo sapiens (Human), this protein is Protein Tat.